The primary structure comprises 158 residues: Endoribonuclease YbeY (158 aa).

Residues histidine 121, histidine 125, and histidine 131 each coordinate Zn(2+).

Belongs to the endoribonuclease YbeY family. The cofactor is Zn(2+).

It localises to the cytoplasm. Functionally, single strand-specific metallo-endoribonuclease involved in late-stage 70S ribosome quality control and in maturation of the 3' terminus of the 16S rRNA. In Exiguobacterium sp. (strain ATCC BAA-1283 / AT1b), this protein is Endoribonuclease YbeY.